A 274-amino-acid polypeptide reads, in one-letter code: 2,3,4,5-tetrahydropyridine-2,6-dicarboxylate N-succinyltransferase (274 aa).

Positions 107 and 144 each coordinate substrate.

It belongs to the transferase hexapeptide repeat family. In terms of assembly, homotrimer.

It is found in the cytoplasm. The enzyme catalyses (S)-2,3,4,5-tetrahydrodipicolinate + succinyl-CoA + H2O = (S)-2-succinylamino-6-oxoheptanedioate + CoA. It participates in amino-acid biosynthesis; L-lysine biosynthesis via DAP pathway; LL-2,6-diaminopimelate from (S)-tetrahydrodipicolinate (succinylase route): step 1/3. In Cereibacter sphaeroides (strain ATCC 17023 / DSM 158 / JCM 6121 / CCUG 31486 / LMG 2827 / NBRC 12203 / NCIMB 8253 / ATH 2.4.1.) (Rhodobacter sphaeroides), this protein is 2,3,4,5-tetrahydropyridine-2,6-dicarboxylate N-succinyltransferase.